Here is a 151-residue protein sequence, read N- to C-terminus: MTKRAPKSGPLSPSCSGGSSRNLELAVKSSEGARRSTRLRLQPLRKPKTSPKKKPVKLQTKMPKKPATAFFFFLDDFRKQYQEENPDVKSMREIGKTCGEKWKTMTYEEKVKYYDIATEKREEFHRAMTEYTKRMESGAHDESETDSDYSE.

Disordered stretches follow at residues 1–62 (MTKR…QTKM) and 132–151 (TKRMESGAHDESETDSDYSE). Residues 7–20 (KSGPLSPSCSGGSS) are compositionally biased toward low complexity. A compositionally biased stretch (basic residues) spans 35 to 56 (RSTRLRLQPLRKPKTSPKKKPV). Positions 63–132 (PKKPATAFFF…EFHRAMTEYT (70 aa)) form a DNA-binding region, HMG box. Residues 132 to 142 (TKRMESGAHDE) show a composition bias toward basic and acidic residues. The residue at position 150 (serine 150) is a Phosphoserine.

Belongs to the HMGB family.

The protein localises to the nucleus. The polypeptide is High mobility group B protein 14 (HMGB14) (Arabidopsis thaliana (Mouse-ear cress)).